The following is a 480-amino-acid chain: Proline--tRNA ligase (480 aa).

Belongs to the class-II aminoacyl-tRNA synthetase family. ProS type 3 subfamily. Homodimer.

Its subcellular location is the cytoplasm. The catalysed reaction is tRNA(Pro) + L-proline + ATP = L-prolyl-tRNA(Pro) + AMP + diphosphate. Its function is as follows. Catalyzes the attachment of proline to tRNA(Pro) in a two-step reaction: proline is first activated by ATP to form Pro-AMP and then transferred to the acceptor end of tRNA(Pro). This chain is Proline--tRNA ligase, found in Metallosphaera sedula (strain ATCC 51363 / DSM 5348 / JCM 9185 / NBRC 15509 / TH2).